The chain runs to 60 residues: Metallothionein (60 aa).

Met-1 bears the N-acetylmethionine mark. The interval 1–28 is beta; that stretch reads MDPCECSKTGTCNCGGSCTCKNCSCTTC. The a divalent metal cation site is built by Cys-4, Cys-6, Cys-12, Cys-14, Cys-18, Cys-20, Cys-23, Cys-25, Cys-28, Cys-32, Cys-33, Cys-35, Cys-36, Cys-40, Cys-43, Cys-47, Cys-49, Cys-54, Cys-58, and Cys-59. The tract at residues 29 to 60 is alpha; sequence TKSCCPCCPSGCPKCASGCVCKGKTCDTTCCQ.

Belongs to the metallothionein superfamily. Type 1 family.

Its function is as follows. Metallothioneins have a high content of cysteine residues that bind various heavy metals. This Pseudopleuronectes americanus (Winter flounder) protein is Metallothionein (mt).